We begin with the raw amino-acid sequence, 486 residues long: N-succinylglutamate 5-semialdehyde dehydrogenase (486 aa).

220–225 (GSSRTG) is an NAD(+) binding site. Catalysis depends on residues Glu243 and Cys277.

Belongs to the aldehyde dehydrogenase family. AstD subfamily.

It catalyses the reaction N-succinyl-L-glutamate 5-semialdehyde + NAD(+) + H2O = N-succinyl-L-glutamate + NADH + 2 H(+). It participates in amino-acid degradation; L-arginine degradation via AST pathway; L-glutamate and succinate from L-arginine: step 4/5. Its function is as follows. Catalyzes the NAD-dependent reduction of succinylglutamate semialdehyde into succinylglutamate. This chain is N-succinylglutamate 5-semialdehyde dehydrogenase, found in Shewanella putrefaciens (strain CN-32 / ATCC BAA-453).